A 492-amino-acid polypeptide reads, in one-letter code: Putative cytochrome P450 136 (492 aa).

C439 lines the heme pocket.

It belongs to the cytochrome P450 family. It depends on heme as a cofactor.

This Mycobacterium tuberculosis (strain CDC 1551 / Oshkosh) protein is Putative cytochrome P450 136 (cyp136).